The primary structure comprises 1088 residues: RNA-directed RNA polymerase (1088 aa).

The 187-residue stretch at Leu-501–Ile-687 folds into the RdRp catalytic domain.

Belongs to the reoviridae RNA-directed RNA polymerase family. In terms of assembly, interacts with VP3 (Potential). Interacts with VP2; this interaction activates VP1. Interacts with NSP5; this interaction is probably necessary for the formation of functional virus factories. Interacts with NSP2; this interaction is weak. The cofactor is Mg(2+).

It is found in the virion. It carries out the reaction RNA(n) + a ribonucleoside 5'-triphosphate = RNA(n+1) + diphosphate. RNA-directed RNA polymerase that is involved in both transcription and genome replication. Together with VP3 capping enzyme, forms an enzyme complex positioned near the channels situated at each of the five-fold vertices of the core. Following infection, the outermost layer of the virus is lost, leaving a double-layered particle (DLP) made up of the core and VP6 shell. VP1 then catalyzes the transcription of fully conservative plus-strand genomic RNAs that are extruded through the DLP's channels into the cytoplasm where they function as mRNAs for translation of viral proteins. One copy of each of the viral (+)RNAs is also recruited during core assembly, together with newly synthesized polymerase complexes and VP2. The polymerase of these novo-formed particles catalyzes the synthesis of complementary minus-strands leading to dsRNA formation. To do so, the polymerase specifically recognizes and binds 4 bases 5'-UGUG-3' in the conserved 3'-sequence of plus-strand RNA templates. VP2 presumably activates the autoinhibited VP1-RNA complex to coordinate packaging and genome replication. Once dsRNA synthesis is complete, the polymerase switches to the transcriptional mode, thus providing secondary transcription. This Homo sapiens (Human) protein is RNA-directed RNA polymerase.